The sequence spans 361 residues: Probable purine permease 5 (361 aa).

9 helical membrane-spanning segments follow: residues 37–57 (WILL…SSLL), 70–90 (WIIS…LLPT), 105–125 (LVLS…MYAY), 134–154 (TSSL…YLIV), 158–178 (LNAS…IIAL), 193–213 (YFAG…IFAL), 235–255 (VMVS…SNDF), 285–305 (LGVL…AGVL), and 315–335 (VAAV…SLVL). The EamA domain occupies 75-178 (VAVAGWPITC…ITGAMAIIAL (104 aa)).

This sequence belongs to the purine permeases (TC 2.A.7.14) family.

Its subcellular location is the membrane. The protein is Probable purine permease 5 (PUP5) of Arabidopsis thaliana (Mouse-ear cress).